Reading from the N-terminus, the 192-residue chain is Capsid protein (192 aa).

Residues 1–30 (MEDSQPIKVRQPSISAPGTHLSPNPGQQSP) form a disordered region. A compositionally biased stretch (polar residues) spans 12–30 (PSISAPGTHLSPNPGQQSP).

Belongs to the tymoviruses capsid protein family.

It localises to the virion. In terms of biological role, self-assembles to form a T=3 icosahedral capsid composed of 180 copies of the capsid protein. The capsid encapsulates the single-stranded RNA genome. This Ononis protein is Capsid protein.